Consider the following 366-residue polypeptide: Homoserine O-acetyltransferase (366 aa).

Positions 47-349 constitute an AB hydrolase-1 domain; that stretch reads NAILICHALS…SGEGHDSFLL (303 aa). S153 acts as the Nucleophile in catalysis. R221 contributes to the substrate binding site. Active-site residues include D311 and H344. D345 contributes to the substrate binding site.

The protein belongs to the AB hydrolase superfamily. MetX family. Homodimer.

It is found in the cytoplasm. The catalysed reaction is L-homoserine + acetyl-CoA = O-acetyl-L-homoserine + CoA. It participates in amino-acid biosynthesis; L-methionine biosynthesis via de novo pathway; O-acetyl-L-homoserine from L-homoserine: step 1/1. Its function is as follows. Transfers an acetyl group from acetyl-CoA to L-homoserine, forming acetyl-L-homoserine. This chain is Homoserine O-acetyltransferase, found in Leptospira interrogans serogroup Icterohaemorrhagiae serovar copenhageni (strain Fiocruz L1-130).